The chain runs to 420 residues: Glutamate-1-semialdehyde 2,1-aminomutase (420 aa).

At Lys259 the chain carries N6-(pyridoxal phosphate)lysine.

It belongs to the class-III pyridoxal-phosphate-dependent aminotransferase family. HemL subfamily. Pyridoxal 5'-phosphate is required as a cofactor.

It localises to the cytoplasm. It carries out the reaction (S)-4-amino-5-oxopentanoate = 5-aminolevulinate. The protein operates within porphyrin-containing compound metabolism; protoporphyrin-IX biosynthesis; 5-aminolevulinate from L-glutamyl-tRNA(Glu): step 2/2. This is Glutamate-1-semialdehyde 2,1-aminomutase from Sulfolobus acidocaldarius (strain ATCC 33909 / DSM 639 / JCM 8929 / NBRC 15157 / NCIMB 11770).